A 149-amino-acid chain; its full sequence is Aquaporin-like protein 2 (149 aa).

The tract at residues 1–35 is disordered; it reads MSNESNDLEKNISHLDPTGVDNAYIPPEQPETKHS. Topologically, residues 1–47 are cytoplasmic; it reads MSNESNDLEKNISHLDPTGVDNAYIPPEQPETKHSRFNIDRGTLRNH. Residues 48-68 form a helical membrane-spanning segment; sequence FIAAVGEFCGTFMFLWCAYVI. Residues 69-89 are Extracellular-facing; that stretch reads CNVANHDVALTTEPEGSHPGQ. The chain crosses the membrane as a helical span at residues 90-110; sequence LIMIALGFGFSVMFSIWCFWW. Residues 111-149 are Cytoplasmic-facing; it reads GFEPSRFSLFVFGQSHLTSQMCSDVVSSDHCWDGCWWCR.

Belongs to the MIP/aquaporin (TC 1.A.8) family.

It localises to the endoplasmic reticulum membrane. The protein resides in the cell membrane. In terms of biological role, water channel required to facilitate the transport of water across membranes. Involved in freeze tolerance, osmotolerance and cell flocculation in liquid cultures. Is non-functional in most laboratory strains. This is Aquaporin-like protein 2 (AQY2-2) from Saccharomyces cerevisiae (strain Lalvin EC1118 / Prise de mousse) (Baker's yeast).